The following is a 255-amino-acid chain: Probable ubiquitin carboxyl-terminal hydrolase (255 aa).

In terms of domain architecture, UCH catalytic spans Asn-13 to Lys-237. Residues Pro-16–Pro-21 are interaction with ubiquitin. Cys-103 serves as the catalytic Nucleophile. His-177 acts as the Proton donor in catalysis. An interaction with ubiquitin region spans residues Glu-227–Leu-232. The interval Leu-235–Lys-255 is disordered. The span at Glu-242 to Lys-255 shows a compositional bias: acidic residues.

Belongs to the peptidase C12 family.

The protein localises to the cytoplasm. The enzyme catalyses Thiol-dependent hydrolysis of ester, thioester, amide, peptide and isopeptide bonds formed by the C-terminal Gly of ubiquitin (a 76-residue protein attached to proteins as an intracellular targeting signal).. In terms of biological role, ubiquitin-protein hydrolase is involved both in the processing of ubiquitin precursors and of ubiquitinated proteins. This enzyme is a thiol protease that recognizes and hydrolyzes a peptide bond at the C-terminal glycine of either ubiquitin or nedd8. The protein is Probable ubiquitin carboxyl-terminal hydrolase (uch1) of Dictyostelium discoideum (Social amoeba).